The primary structure comprises 539 residues: Tyrosinase (539 aa).

His-63, His-84, His-93, His-290, His-294, and His-333 together coordinate Cu cation. A cross-link (2'-(S-cysteinyl)-histidine (Cys-His)) is located at residues 82 to 84 (CHH).

It belongs to the tyrosinase family. Homotetramer. The cofactor is Cu(2+). The N-terminus is blocked.

The enzyme catalyses 2 L-dopa + O2 = 2 L-dopaquinone + 2 H2O. The catalysed reaction is L-tyrosine + O2 = L-dopaquinone + H2O. Its activity is regulated as follows. Activated by acidifying treatment at pH 3.0. Functionally, this is a copper-containing oxidase that functions in the formation of pigments such as melanins and other polyphenolic compounds. The chain is Tyrosinase (melO) from Aspergillus oryzae (strain ATCC 42149 / RIB 40) (Yellow koji mold).